Here is a 144-residue protein sequence, read N- to C-terminus: Large ribosomal subunit protein uL15 (144 aa).

Over residues methionine 1–histidine 13 the composition is skewed to basic residues. The interval methionine 1 to asparagine 32 is disordered.

The protein belongs to the universal ribosomal protein uL15 family. As to quaternary structure, part of the 50S ribosomal subunit.

In terms of biological role, binds to the 23S rRNA. This chain is Large ribosomal subunit protein uL15, found in Thermoplasma acidophilum (strain ATCC 25905 / DSM 1728 / JCM 9062 / NBRC 15155 / AMRC-C165).